Consider the following 356-residue polypeptide: Histidinol-phosphate aminotransferase (356 aa).

Position 214 is an N6-(pyridoxal phosphate)lysine (lysine 214).

The protein belongs to the class-II pyridoxal-phosphate-dependent aminotransferase family. Histidinol-phosphate aminotransferase subfamily. Homodimer. Pyridoxal 5'-phosphate serves as cofactor.

The enzyme catalyses L-histidinol phosphate + 2-oxoglutarate = 3-(imidazol-4-yl)-2-oxopropyl phosphate + L-glutamate. Its pathway is amino-acid biosynthesis; L-histidine biosynthesis; L-histidine from 5-phospho-alpha-D-ribose 1-diphosphate: step 7/9. This is Histidinol-phosphate aminotransferase from Escherichia fergusonii (strain ATCC 35469 / DSM 13698 / CCUG 18766 / IAM 14443 / JCM 21226 / LMG 7866 / NBRC 102419 / NCTC 12128 / CDC 0568-73).